We begin with the raw amino-acid sequence, 487 residues long: Aromatic-L-amino-acid decarboxylase (487 aa).

The residue at position 1 (Met1) is an N-acetylmethionine. 2 consecutive repeat copies span residues 58 to 115 (EDIE…TELE) and 118 to 178 (MMDW…MQAA). The interval 58 to 178 (EDIEKIIMPG…AASPELMQAA (121 aa)) is 2 X approximate tandem repeats. Thr82 serves as a coordination point for substrate. Pyridoxal 5'-phosphate is bound by residues Ala148 and Ser149. Position 192 (His192) interacts with substrate. Thr246 and Asn300 together coordinate pyridoxal 5'-phosphate. N6-(pyridoxal phosphate)lysine is present on Lys303.

It belongs to the group II decarboxylase family. Homodimer. The cofactor is pyridoxal 5'-phosphate.

It carries out the reaction L-dopa + H(+) = dopamine + CO2. The enzyme catalyses 5-hydroxy-L-tryptophan + H(+) = serotonin + CO2. It participates in catecholamine biosynthesis; dopamine biosynthesis; dopamine from L-tyrosine: step 2/2. In terms of biological role, catalyzes the decarboxylation of L-3,4-dihydroxyphenylalanine (DOPA) to dopamine and L-5-hydroxytryptophan to serotonin. The polypeptide is Aromatic-L-amino-acid decarboxylase (DDC) (Bos taurus (Bovine)).